The chain runs to 446 residues: Adenylosuccinate synthetase (446 aa).

GTP is bound by residues 21–27 (GDEGKGK) and 49–51 (GHT). The active-site Proton acceptor is the aspartate 22. Positions 22 and 49 each coordinate Mg(2+). IMP is bound by residues 22–25 (DEGK), 47–50 (NAGH), threonine 141, arginine 155, glutamine 236, threonine 251, and arginine 319. The active-site Proton donor is the histidine 50. 315–321 (VTTGRSR) is a substrate binding site. GTP-binding positions include arginine 321, 347 to 349 (KLD), and 429 to 431 (STS).

The protein belongs to the adenylosuccinate synthetase family. Homodimer. It depends on Mg(2+) as a cofactor.

The protein resides in the cytoplasm. It catalyses the reaction IMP + L-aspartate + GTP = N(6)-(1,2-dicarboxyethyl)-AMP + GDP + phosphate + 2 H(+). It functions in the pathway purine metabolism; AMP biosynthesis via de novo pathway; AMP from IMP: step 1/2. Plays an important role in the de novo pathway of purine nucleotide biosynthesis. Catalyzes the first committed step in the biosynthesis of AMP from IMP. The sequence is that of Adenylosuccinate synthetase from Polaromonas sp. (strain JS666 / ATCC BAA-500).